We begin with the raw amino-acid sequence, 245 residues long: Uridylate kinase (245 aa).

Residue 16 to 19 (KLSG) participates in ATP binding. Gly58 is a UMP binding site. The ATP site is built by Gly59 and Arg63. UMP contacts are provided by residues Asp78 and 139-146 (TGNPFFTT). 3 residues coordinate ATP: Thr166, Tyr172, and Asp175.

The protein belongs to the UMP kinase family. In terms of assembly, homohexamer.

It localises to the cytoplasm. It carries out the reaction UMP + ATP = UDP + ADP. The protein operates within pyrimidine metabolism; CTP biosynthesis via de novo pathway; UDP from UMP (UMPK route): step 1/1. With respect to regulation, inhibited by UTP. In terms of biological role, catalyzes the reversible phosphorylation of UMP to UDP. The polypeptide is Uridylate kinase (Idiomarina loihiensis (strain ATCC BAA-735 / DSM 15497 / L2-TR)).